The primary structure comprises 441 residues: Maltose-6'-phosphate glucosidase (441 aa).

4 to 70 (FSILIAGGGS…PQIKFSYSTN (67 aa)) serves as a coordination point for NAD(+). Substrate-binding residues include R93 and N147. Residue C169 participates in Mn(2+) binding. The active-site Proton donor is D170. H200 is a Mn(2+) binding site. The Proton acceptor role is filled by Y264. R284 is a binding site for substrate.

It belongs to the glycosyl hydrolase 4 family. As to quaternary structure, homotetramer. NAD(+) is required as a cofactor. Requires Mn(2+) as cofactor. Fe(2+) serves as cofactor. It depends on Co(2+) as a cofactor. The cofactor is Ni(2+).

The enzyme catalyses alpha-maltose 6'-phosphate + H2O = D-glucose 6-phosphate + D-glucose. It functions in the pathway glycan degradation; maltose degradation. Its function is as follows. Hydrolyzes a wide variety of 6-phospho-alpha-D-glucosides including maltose-6'P, trehalose-6P and the 6'-phosphorylated derivatives of the five linkage-isomeric alpha-D-glucosyl-D-fructoses: trehalulose-6'P, turanose-6'P, maltulose-6'P, leucrose-6'P, and palatinose-6'P. However, sucrose-6P is not a substrate for MalH, and this enzyme also fails to hydrolyze beta-O-linked phosphorylated disaccharides such as cellobiose-6'P and gentobiose-6'P. The chain is Maltose-6'-phosphate glucosidase (malH) from Fusobacterium mortiferum.